The sequence spans 674 residues: Probable L-type lectin-domain containing receptor kinase I.5 (674 aa).

An N-terminal signal peptide occupies residues 1–22; the sequence is MSKGLFLIWLISSFHLISFSTS. Topologically, residues 23–286 are extracellular; it reads SKDTSFVFNG…RPRAEHKKVQ (264 aa). Positions 25 to 258 are legume-lectin like; it reads DTSFVFNGFG…YHYLLGWSFS (234 aa). N-linked (GlcNAc...) asparagine glycosylation is found at Asn124, Asn181, Asn185, Asn204, and Asn225. The chain crosses the membrane as a helical span at residues 287–307; it reads FALIIALPVILAIVVMAVLAG. The Cytoplasmic segment spans residues 308–674; the sequence is VYYHRKKKYA…DHEQPLEFKS (367 aa). Positions 344-625 constitute a Protein kinase domain; that stretch reads FHKDRFLGRG…LPLPDFSPYT (282 aa). Residues 350-358 and Lys372 contribute to the ATP site; that span reads LGRGGFGEV. Asp468 functions as the Proton acceptor in the catalytic mechanism. Residues 649–662 show a composition bias toward low complexity; it reads NWSAPSASSSSANN. The interval 649-674 is disordered; it reads NWSAPSASSSSANNSKDHEQPLEFKS. Basic and acidic residues predominate over residues 663-674; sequence SKDHEQPLEFKS.

In the C-terminal section; belongs to the protein kinase superfamily. Ser/Thr protein kinase family. This sequence in the N-terminal section; belongs to the leguminous lectin family.

It is found in the cell membrane. The catalysed reaction is L-seryl-[protein] + ATP = O-phospho-L-seryl-[protein] + ADP + H(+). The enzyme catalyses L-threonyl-[protein] + ATP = O-phospho-L-threonyl-[protein] + ADP + H(+). The sequence is that of Probable L-type lectin-domain containing receptor kinase I.5 (LECRK15) from Arabidopsis thaliana (Mouse-ear cress).